A 161-amino-acid chain; its full sequence is Urease accessory protein UreE (161 aa).

Positions 138–161 (RGAYHAHGGHSHDHGQGHHHHDHG) are disordered.

The protein belongs to the UreE family.

It is found in the cytoplasm. Its function is as follows. Involved in urease metallocenter assembly. Binds nickel. Probably functions as a nickel donor during metallocenter assembly. This Agrobacterium fabrum (strain C58 / ATCC 33970) (Agrobacterium tumefaciens (strain C58)) protein is Urease accessory protein UreE.